The chain runs to 138 residues: Large ribosomal subunit protein uL16 (138 aa).

Over residues 1–19 (MLIPRKVAHRKQHHPKRTG) the composition is skewed to basic residues. The interval 1–22 (MLIPRKVAHRKQHHPKRTGAAK) is disordered.

This sequence belongs to the universal ribosomal protein uL16 family. Part of the 50S ribosomal subunit.

Functionally, binds 23S rRNA and is also seen to make contacts with the A and possibly P site tRNAs. This Parafrankia sp. (strain EAN1pec) protein is Large ribosomal subunit protein uL16.